Consider the following 271-residue polypeptide: Putative phosphoenolpyruvate synthase regulatory protein (271 aa).

151–158 (GVSRSGKT) is an ADP binding site.

This sequence belongs to the pyruvate, phosphate/water dikinase regulatory protein family. PSRP subfamily.

The enzyme catalyses [pyruvate, water dikinase] + ADP = [pyruvate, water dikinase]-phosphate + AMP + H(+). It catalyses the reaction [pyruvate, water dikinase]-phosphate + phosphate + H(+) = [pyruvate, water dikinase] + diphosphate. In terms of biological role, bifunctional serine/threonine kinase and phosphorylase involved in the regulation of the phosphoenolpyruvate synthase (PEPS) by catalyzing its phosphorylation/dephosphorylation. This Burkholderia cenocepacia (strain ATCC BAA-245 / DSM 16553 / LMG 16656 / NCTC 13227 / J2315 / CF5610) (Burkholderia cepacia (strain J2315)) protein is Putative phosphoenolpyruvate synthase regulatory protein.